A 506-amino-acid polypeptide reads, in one-letter code: MEPEPLDPRAIGFMRRNLAMLRQTPMSVVLAGLILLASIYFPRFMFKSQMARFPLILEHLSSEQRRARFLVGAKALYKDGSQKFRGMAYRMQTLDEQQIVLPLSALTELRKAPEEVLSFYDMFSKVVDTIKRDLTPKLTKITSKICDEVDAALDTYLPSHGKWTEINVSKTALDIIAKVSAHLFIGGDVANDPGYLECTKNFTVHLGEATRAIKVTRVWLRPFLAPRLPEVKRLLETRTKLRSYVKRVIEEREAKIKNPDWVPPDDMMQWLLDRADRQKDTLEDCTAAQVLLILGTINASMQTLIAILHTLAVTPEYVEPLREEIRNTLNSDGSIPVSAMKEFGKMDSYFKEVGMHFPVIIEPYFRRVRKGFTLSNGQYLPPGVAIVIANPLVTDSKYDTFDGFRHYKLREASAQKDKPNHRWLIANETEFRWGYDNHVCPGRFYAHNLLKIIFARIVENYDIKMPGNVEGIEARYPMVEHGNVVMEPRDKPLLLRRVKSHQGHVD.

Residues 26–46 form a helical membrane-spanning segment; it reads MSVVLAGLILLASIYFPRFMF. Residues N167, N201, N298, and N427 are each glycosylated (N-linked (GlcNAc...) asparagine). C440 contacts heme.

Belongs to the cytochrome P450 family. Requires heme as cofactor.

It localises to the membrane. The protein operates within phytotoxin biosynthesis. Functionally, cytochrome P450 monooxygenase; part of the gene cluster that mediates the biosynthesis of the phytotoxin tentoxin, an inhibitor the F1-ATPase activity of chloroplasts, resulting in chlorosis in sensitive plants. Tentoxin is a cyclic tetrapeptide that consists of four amino acid residues: glycine (Gly), alanine (Ala), leucine (Leu), and dehydrophenylalanine (DPhe). In addition, both the Ala and DPhe residues are N-methylated. The nonribosomal peptide synthetase TES assembles tentoxin from the four substrate amino acids. The adenylation domains of each of the 4 modules are responsible for the activation of Gly, Ala, Leu and DPhe, respectively. In addition, the N-methyltransferase domains in the second and fourth modules of TES could be responsible for N-methylation of Ala and DPhe residues. Finally, the condensation domain located in the termination module probably catalyzes the formation of the intramolecular macrocyclization and then the release of tentoxin. The cytochrome P450 monooxygenase TES1 is predicted to be involved in the formation of DPhe. In Alternaria alternata (Alternaria rot fungus), this protein is Cytochrome P450 monooxygenase TES1.